Reading from the N-terminus, the 302-residue chain is Quinolinate synthase (302 aa).

Iminosuccinate contacts are provided by His-24 and Ser-41. Cys-86 lines the [4Fe-4S] cluster pocket. Iminosuccinate is bound by residues 112–114 and Ser-129; that span reads YVN. Cys-171 contributes to the [4Fe-4S] cluster binding site. Residues 197–199 and Thr-214 contribute to the iminosuccinate site; that span reads HPE. Cys-259 is a [4Fe-4S] cluster binding site.

The protein belongs to the quinolinate synthase family. Type 2 subfamily. [4Fe-4S] cluster is required as a cofactor.

Its subcellular location is the cytoplasm. It carries out the reaction iminosuccinate + dihydroxyacetone phosphate = quinolinate + phosphate + 2 H2O + H(+). Its pathway is cofactor biosynthesis; NAD(+) biosynthesis; quinolinate from iminoaspartate: step 1/1. Its function is as follows. Catalyzes the condensation of iminoaspartate with dihydroxyacetone phosphate to form quinolinate. The sequence is that of Quinolinate synthase from Dehalococcoides mccartyi (strain ATCC BAA-2266 / KCTC 15142 / 195) (Dehalococcoides ethenogenes (strain 195)).